The following is a 92-amino-acid chain: uncharacterized protein (92 aa).

This is an uncharacterized protein from Schizosaccharomyces pombe (strain 972 / ATCC 24843) (Fission yeast).